We begin with the raw amino-acid sequence, 223 residues long: Urease accessory protein UreF (223 aa).

It belongs to the UreF family. In terms of assembly, ureD, UreF and UreG form a complex that acts as a GTP-hydrolysis-dependent molecular chaperone, activating the urease apoprotein by helping to assemble the nickel containing metallocenter of UreC. The UreE protein probably delivers the nickel.

It is found in the cytoplasm. In terms of biological role, required for maturation of urease via the functional incorporation of the urease nickel metallocenter. The sequence is that of Urease accessory protein UreF from Mesorhizobium japonicum (strain LMG 29417 / CECT 9101 / MAFF 303099) (Mesorhizobium loti (strain MAFF 303099)).